Reading from the N-terminus, the 203-residue chain is MLNFFLITIQFLSGAVMYSHIIAKIKGIDLRKIRDGNPGSSNLWRAAGWKYGFPALMLDYFKGTFPIAFFVWNESFHVNRYVIAFAALSGILGHAFSPFLKFKGGKAIATTFGAWSVLTKWEGPMVLGTVFTIFSILHRLRGKNKTTPEEDAFRVMIGFAALLIYTMWKVFNGMPELAILYFGNFLIVFYKHRLELRRYLKGV.

The next 6 helical transmembrane spans lie at L2–I22, G52–W72, V82–F102, V117–L137, E150–W168, and V170–Y190.

Belongs to the PlsY family. In terms of assembly, probably interacts with PlsX.

The protein resides in the cell inner membrane. It carries out the reaction an acyl phosphate + sn-glycerol 3-phosphate = a 1-acyl-sn-glycero-3-phosphate + phosphate. It participates in lipid metabolism; phospholipid metabolism. Its function is as follows. Catalyzes the transfer of an acyl group from acyl-phosphate (acyl-PO(4)) to glycerol-3-phosphate (G3P) to form lysophosphatidic acid (LPA). This enzyme utilizes acyl-phosphate as fatty acyl donor, but not acyl-CoA or acyl-ACP. The chain is Glycerol-3-phosphate acyltransferase 1 from Thermotoga maritima (strain ATCC 43589 / DSM 3109 / JCM 10099 / NBRC 100826 / MSB8).